The chain runs to 693 residues: MFLVFTCSLILLASCSSCQHHTCHCAGRIFICQESKVVQLPRDIPTNATELRFVLTKMRVIPKGAFAGLLDLEKIEISQNDALEVIEAKVFSNLPKLHEIRIEKANNLVYIDQDAFQHLPSLRYLLISNTGLRFLPVVQKVHSFQKVLLDIQDNINIRTIERNSFMGLSSESVILWLNKNGIQEIENHAFNGTYLDELNLSDNQNLEKLPNEVFQGANGPVVLDISRTKISFLPGHGLELIKKLRARSTYNLKKLPDLSKFRSLIEANFTYPSHCCAFTNWKRQNTELHPICSISQAKQDLDEQHGNKIHRRSAAEDYISNYAIGFDPSENEFDYGLCNEVVNVACSPKPDAFNPCEDIMGYTILRVLIWFISILAITGNIVVLIILISSQYKLTVPRFLMCNLAFADLCIGIYLLFIASVDIQTKSQYYNYAIDWQTGAGCNAAGFFTVFASELSVYTLTVITLERWHTITYAMQLDRKVRFRHAVIIMIFGWMFAFTVALLPIFGVSSYMKVSICLPMDIETPFSQAYVIFLLVLNVLAFVIICACYICIYFTVRNPNVISSNSDTKIAKRMAILIFTDFLCMAPISFFAISASLKVPLITVSKSKILLVLFYPINSCANPFLYAIFTKTFRRDFFILLSKFGCCEMQAQIYRTDTSSSAHNFHTRNGHYPPASKNSDGTIYSLVPLNHLN.

An N-terminal signal peptide occupies residues 1-18 (MFLVFTCSLILLASCSSC). 2 cysteine pairs are disulfide-bonded: Cys-18–Cys-25 and Cys-23–Cys-32. An LRRNT domain is found at 19–46 (QHHTCHCAGRIFICQESKVVQLPRDIPT). Residues 19–366 (QHHTCHCAGR…EDIMGYTILR (348 aa)) are Extracellular-facing. Residue Asn-47 is glycosylated (N-linked (GlcNAc...) asparagine). LRR repeat units lie at residues 49-72 (TELR…LLDL), 73-97 (EKIE…LPKL), 98-118 (HEIR…AFQH), 119-143 (LPSL…KVHS), 144-169 (FQKV…MGLS), 170-192 (SESV…AFNG), 193-216 (TYLD…VFQG), 217-240 (ANGP…GLEL), and 241-259 (IKKL…PDLS). N-linked (GlcNAc...) asparagine glycans are attached at residues Asn-191 and Asn-199. Residue Asn-268 is glycosylated (N-linked (GlcNAc...) asparagine). 4 cysteine pairs are disulfide-bonded: Cys-275–Cys-346, Cys-276–Cys-292, Cys-276–Cys-356, and Cys-292–Cys-338. The helical transmembrane segment at 367–387 (VLIWFISILAITGNIVVLIIL) threads the bilayer. Over 388–398 (ISSQYKLTVPR) the chain is Cytoplasmic. A helical transmembrane segment spans residues 399–421 (FLMCNLAFADLCIGIYLLFIASV). At 422–443 (DIQTKSQYYNYAIDWQTGAGCN) the chain is on the extracellular side. An intrachain disulfide couples Cys-442 to Cys-517. Residues 444 to 465 (AAGFFTVFASELSVYTLTVITL) form a helical membrane-spanning segment. Residues 466-485 (ERWHTITYAMQLDRKVRFRH) lie on the Cytoplasmic side of the membrane. A helical membrane pass occupies residues 486–508 (AVIIMIFGWMFAFTVALLPIFGV). Over 509–528 (SSYMKVSICLPMDIETPFSQ) the chain is Extracellular. Residues 529 to 550 (AYVIFLLVLNVLAFVIICACYI) form a helical membrane-spanning segment. The Cytoplasmic portion of the chain corresponds to 551 to 573 (CIYFTVRNPNVISSNSDTKIAKR). The chain crosses the membrane as a helical span at residues 574 to 597 (MAILIFTDFLCMAPISFFAISASL). Residues 598 to 608 (KVPLITVSKSK) are Extracellular-facing. A helical transmembrane segment spans residues 609-630 (ILLVLFYPINSCANPFLYAIFT). Topologically, residues 631 to 693 (KTFRRDFFIL…YSLVPLNHLN (63 aa)) are cytoplasmic.

The protein belongs to the G-protein coupled receptor 1 family. FSH/LSH/TSH subfamily. As to quaternary structure, homotrimer. Functions as a homotrimer binding the FSH hormone heterodimer composed of CGA and FSHB.

Its subcellular location is the cell membrane. G protein-coupled receptor for follitropin, the follicle-stimulating hormone. Through cAMP production activates the downstream PI3K-AKT and ERK1/ERK2 signaling pathways. The protein is Follicle-stimulating hormone receptor (FSHR) of Cairina moschata (Muscovy duck).